We begin with the raw amino-acid sequence, 432 residues long: MGNNVVVLGTQWGDEGKGKIVDLLTERAKYVVRYQGGHNAGHTLVINGEKTVLHLIPSGILRENVTSIIGNGVVLSPAALMKEMKELEDRGIPVRERLLLSEACPLILDYHVALDNAREKARGAKAIGTTGRGIGPAYEDKVARRGLRVGDLFDKETFAEKLKEVMEYHNFQLVNYYKVEAVDYQKVLDDTMAVADILTSMVVDVSDLLDQARQRGDFVMFEGAQGTLLDIDHGTYPYVTSSNTTAGGVATGSGLGPRYVDYVLGILKAYSTRVGAGPFPTELFDETGEFLCKQGNEYGATTGRRRRTGWLDTVAVRRAVQLNSLSGFCLTKLDVLDGLKEVKLCVAYRMPDGREVTTTPLAADDWKGVEPIYETMPGWSESTFGVKDRSGLPQAALNYIKRIEELTGVPIDIISTGPDRTETMILRDPFDA.

Residues 13–19 (GDEGKGK) and 41–43 (GHT) contribute to the GTP site. The Proton acceptor role is filled by Asp-14. Mg(2+) is bound by residues Asp-14 and Gly-41. IMP is bound by residues 14–17 (DEGK), 39–42 (NAGH), Thr-130, Arg-144, Gln-225, Thr-240, and Arg-304. The active-site Proton donor is His-42. Position 300–306 (300–306 (ATTGRRR)) interacts with substrate. GTP contacts are provided by residues Arg-306, 332-334 (KLD), and 415-417 (STG).

It belongs to the adenylosuccinate synthetase family. In terms of assembly, homodimer. Mg(2+) is required as a cofactor.

It is found in the cytoplasm. The catalysed reaction is IMP + L-aspartate + GTP = N(6)-(1,2-dicarboxyethyl)-AMP + GDP + phosphate + 2 H(+). It functions in the pathway purine metabolism; AMP biosynthesis via de novo pathway; AMP from IMP: step 1/2. Plays an important role in the de novo pathway of purine nucleotide biosynthesis. Catalyzes the first committed step in the biosynthesis of AMP from IMP. The chain is Adenylosuccinate synthetase from Salmonella agona (strain SL483).